A 370-amino-acid polypeptide reads, in one-letter code: tRNA-specific 2-thiouridylase MnmA (370 aa).

ATP-binding positions include 19 to 26 and Leu45; that span reads AMSGGVDS. The Nucleophile role is filled by Cys113. A disulfide bridge links Cys113 with Cys209. Gly137 contacts ATP. The segment at 159–161 is interaction with tRNA; sequence KDQ. Cys209 (cysteine persulfide intermediate) is an active-site residue.

This sequence belongs to the MnmA/TRMU family.

It is found in the cytoplasm. The enzyme catalyses S-sulfanyl-L-cysteinyl-[protein] + uridine(34) in tRNA + AH2 + ATP = 2-thiouridine(34) in tRNA + L-cysteinyl-[protein] + A + AMP + diphosphate + H(+). In terms of biological role, catalyzes the 2-thiolation of uridine at the wobble position (U34) of tRNA, leading to the formation of s(2)U34. In Rickettsia conorii (strain ATCC VR-613 / Malish 7), this protein is tRNA-specific 2-thiouridylase MnmA.